Here is a 571-residue protein sequence, read N- to C-terminus: Proline--tRNA ligase (571 aa).

This sequence belongs to the class-II aminoacyl-tRNA synthetase family. ProS type 1 subfamily. Homodimer.

The protein localises to the cytoplasm. It catalyses the reaction tRNA(Pro) + L-proline + ATP = L-prolyl-tRNA(Pro) + AMP + diphosphate. In terms of biological role, catalyzes the attachment of proline to tRNA(Pro) in a two-step reaction: proline is first activated by ATP to form Pro-AMP and then transferred to the acceptor end of tRNA(Pro). As ProRS can inadvertently accommodate and process non-cognate amino acids such as alanine and cysteine, to avoid such errors it has two additional distinct editing activities against alanine. One activity is designated as 'pretransfer' editing and involves the tRNA(Pro)-independent hydrolysis of activated Ala-AMP. The other activity is designated 'posttransfer' editing and involves deacylation of mischarged Ala-tRNA(Pro). The misacylated Cys-tRNA(Pro) is not edited by ProRS. The chain is Proline--tRNA ligase from Pseudomonas putida (strain ATCC 47054 / DSM 6125 / CFBP 8728 / NCIMB 11950 / KT2440).